Here is a 1250-residue protein sequence, read N- to C-terminus: Cell adhesion molecule-related/down-regulated by oncogenes (1250 aa).

A signal peptide spans 1–24 (MHPDLGPLWTLLYVLVILCSSVSS). Topologically, residues 25 to 962 (DLAPYFISEP…SPARSSDMLY (938 aa)) are extracellular. Ig-like C2-type domains are found at residues 28-113 (PYFI…ATVS), 119-203 (DFDS…LKVE), 224-302 (PALS…KHVT), 309-395 (EHAS…GRLQ), and 404-515 (PVIV…AFLT). Cysteines 49 and 96 form a disulfide. N-linked (GlcNAc...) asparagine glycosylation is found at asparagine 99, asparagine 179, asparagine 286, asparagine 293, asparagine 341, and asparagine 426. 2 cysteine pairs are disulfide-bonded: cysteine 140/cysteine 190 and cysteine 242/cysteine 289. 2 cysteine pairs are disulfide-bonded: cysteine 332-cysteine 379 and cysteine 425-cysteine 499. Polar residues predominate over residues 524 to 534 (KAESVTPSEAS). A disordered region spans residues 524–547 (KAESVTPSEASQNDERDPQDGSES). N-linked (GlcNAc...) asparagine glycosylation is present at asparagine 569. Fibronectin type-III domains follow at residues 572–673 (VPDA…SKEK), 719–814 (APDR…VAGF), and 822–922 (PITG…TKVK). An N-linked (GlcNAc...) asparagine glycan is attached at asparagine 869. The tract at residues 929 to 951 (DYPVKELSTPPSSSGNAGNVGPA) is disordered. The chain crosses the membrane as a helical span at residues 963–983 (LIVGCVLGVMVLILMVFIALC). Over 984–1250 (LWKSRQQSTI…SVVLQQAQET (267 aa)) the chain is Cytoplasmic. 2 disordered regions span residues 1178–1208 (DNIS…AEDK) and 1223–1250 (DCGE…AQET). Residues 1193–1208 (EFSRGDSSGHSEAEDK) are compositionally biased toward basic and acidic residues.

Part of a complex that contains BOC, CDON, NEO1, cadherins and CTNNB1. Interacts with NTN3. Interacts with DHH, IHH and SHH. Post-translationally, N-glycosylated. Highly expressed in somites and the dorsal lips of the neural tube during embryogenesis. Detected at very low levels in adult tissues.

The protein localises to the cell membrane. Functionally, component of a cell-surface receptor complex that mediates cell-cell interactions between muscle precursor cells. Promotes differentiation of myogenic cells. Required for response to NTN3 and activation of NFATC3. In Mus musculus (Mouse), this protein is Cell adhesion molecule-related/down-regulated by oncogenes (Cdon).